The following is a 194-amino-acid chain: Adenylate kinase isoenzyme 1 (194 aa).

Methionine 1 bears the N-acetylmethionine mark. 18–23 (GSGKGT) is a binding site for ATP. Serine 38 bears the Phosphoserine mark. The segment at 38 to 67 (STGDLLRAEVSSGSARGKMLSEIMEKGQLV) is NMP. AMP contacts are provided by residues threonine 39, arginine 44, 65–67 (QLV), 94–97 (GYPR), and glutamine 101. The segment at 131-141 (KRGETSGRVDD) is LID. Residue arginine 132 coordinates ATP. Arginine 138 and arginine 149 together coordinate AMP. Glycine 177 is an ATP binding site.

Belongs to the adenylate kinase family. AK1 subfamily. Monomer. The cofactor is Mg(2+).

The protein resides in the cytoplasm. The catalysed reaction is a ribonucleoside 5'-phosphate + ATP = a ribonucleoside 5'-diphosphate + ADP. It catalyses the reaction AMP + ATP = 2 ADP. The enzyme catalyses dAMP + ATP = dADP + ADP. It carries out the reaction dATP + AMP = dADP + ADP. The catalysed reaction is dAMP + dATP = 2 dADP. It catalyses the reaction a 2'-deoxyribonucleoside 5'-diphosphate + ATP = a 2'-deoxyribonucleoside 5'-triphosphate + ADP. The enzyme catalyses a ribonucleoside 5'-diphosphate + ATP = a ribonucleoside 5'-triphosphate + ADP. It carries out the reaction CDP + GTP = CTP + GDP. The catalysed reaction is GDP + ATP = GTP + ADP. It catalyses the reaction UDP + ATP = UTP + ADP. The enzyme catalyses GTP + UDP = UTP + GDP. It carries out the reaction dTDP + GTP = dTTP + GDP. The catalysed reaction is dCDP + GTP = dCTP + GDP. It catalyses the reaction dGDP + ATP = dGTP + ADP. The enzyme catalyses dADP + GTP = dATP + GDP. It carries out the reaction thiamine diphosphate + ADP = thiamine triphosphate + AMP. Functionally, catalyzes the reversible transfer of the terminal phosphate group between ATP and AMP. Also displays broad nucleoside diphosphate kinase activity. Plays an important role in cellular energy homeostasis and in adenine nucleotide metabolism. Also catalyzes at a very low rate the synthesis of thiamine triphosphate (ThTP) from thiamine diphosphate (ThDP) and ADP. This chain is Adenylate kinase isoenzyme 1, found in Sus scrofa (Pig).